The following is a 203-amino-acid chain: Probable GTP-binding protein EngB (203 aa).

The EngB-type G domain maps to 22-195 (GIPEIALAGR…WEEIVNQYNQ (174 aa)). Residues 30-37 (GRSNVGKS), 57-61 (GKTRT), 75-78 (DLPG), 142-145 (TKAD), and 174-176 (VSS) each bind GTP. The Mg(2+) site is built by Ser-37 and Thr-59.

This sequence belongs to the TRAFAC class TrmE-Era-EngA-EngB-Septin-like GTPase superfamily. EngB GTPase family. The cofactor is Mg(2+).

Functionally, necessary for normal cell division and for the maintenance of normal septation. This Clostridioides difficile (strain 630) (Peptoclostridium difficile) protein is Probable GTP-binding protein EngB.